Here is a 635-residue protein sequence, read N- to C-terminus: Sodium- and chloride-dependent creatine transporter 1 (635 aa).

Positions Met1–Asp28 are disordered. At Met1–Asp60 the chain is on the cytoplasmic side. Phosphothreonine is present on Thr42. Residues Phe61–Leu81 traverse the membrane as a helical segment. At Cys82–Gly87 the chain is on the extracellular side. A helical transmembrane segment spans residues Gly88–Leu108. At Glu109–Met138 the chain is on the cytoplasmic side. A helical membrane pass occupies residues Val139 to Leu159. The Extracellular portion of the chain corresponds to Val160–Ala230. N-linked (GlcNAc...) asparagine glycans are attached at residues Asn192 and Asn197. A helical membrane pass occupies residues Leu231 to Trp251. Residues Lys252 to Tyr269 are Cytoplasmic-facing. Residues Val270–Ile290 form a helical membrane-spanning segment. Residues Tyr291–Gln304 are Extracellular-facing. Residues Val305–Thr325 traverse the membrane as a helical segment. Over Ala326 to Ala341 the chain is Cytoplasmic. The helical transmembrane segment at Ile342–Ile362 threads the bilayer. Residues Leu363–Thr394 lie on the Extracellular side of the membrane. A helical transmembrane segment spans residues Leu395–Leu415. The Cytoplasmic portion of the chain corresponds to Asp416–Glu444. A helical transmembrane segment spans residues Ile445–Gly465. The Extracellular segment spans residues Gly466–Ser479. Residues Gly480 to Ala500 form a helical membrane-spanning segment. Topologically, residues Asp501–Lys520 are cytoplasmic. Residues Trp521 to Tyr541 traverse the membrane as a helical segment. The Extracellular segment spans residues Tyr542–Met560. Asn548 carries N-linked (GlcNAc...) asparagine glycosylation. A helical transmembrane segment spans residues Gly561 to Leu581. Topologically, residues Arg582–Met635 are cytoplasmic. 2 positions are modified to phosphothreonine: Thr617 and Thr620. Ser623 carries the phosphoserine modification.

The protein belongs to the sodium:neurotransmitter symporter (SNF) (TC 2.A.22) family. SLC6A8 subfamily. In terms of processing, glycosylated. In terms of tissue distribution, predominantly expressed in skeletal muscle and kidney. Also found in brain, heart, colon, testis and prostate.

Its subcellular location is the cell membrane. It localises to the apical cell membrane. The enzyme catalyses creatine(out) + chloride(out) + 2 Na(+)(out) = creatine(in) + chloride(in) + 2 Na(+)(in). Creatine:sodium symporter which mediates the uptake of creatine. Plays an important role in supplying creatine to the brain via the blood-brain barrier. This chain is Sodium- and chloride-dependent creatine transporter 1 (SLC6A8), found in Homo sapiens (Human).